Here is a 696-residue protein sequence, read N- to C-terminus: Junctophilin-2 (696 aa).

The Cytoplasmic portion of the chain corresponds to 1 to 674; sequence MSGGRFDFDD…EVEVEEVPNT (674 aa). MORN repeat units lie at residues 14 to 36, 38 to 59, 60 to 79, 82 to 104, 106 to 128, and 129 to 151; these read YCGG…KGQG, YSGS…SGNT, FEGY…TKGR, YKGE…NSGA, YEGT…DGGT, and YQGQ…PYGM. 2 positions are modified to phosphoserine: S162 and S165. 2 disordered regions span residues 164-192 and 246-273; these read SSLR…SPPV and LSSG…AAPF. 2 MORN repeats span residues 285–307 and 308–330; these read YMGE…SGLR and YEGE…DGHR. A Bipartite nuclear localization signal motif is present at residues 345 to 359; sequence KRRVLPLKSSKVRQK. The interval 439-664 is disordered; that stretch reads NSESLLEPPE…RKEVAQAKEA (226 aa). Phosphoserine occurs at positions 440, 442, and 462. A compositionally biased stretch (basic and acidic residues) spans 457–471; that stretch reads ERPRESPQLHERETP. The residue at position 470 (T470) is a Phosphothreonine. Over residues 474 to 487 the composition is skewed to pro residues; it reads EGGPPSPAGTPPQP. The residue at position 479 (S479) is a Phosphoserine. The residue at position 483 (T483) is a Phosphothreonine. A Nuclear localization signal motif is present at residues 488–492; the sequence is KRPRP. 2 positions are modified to phosphoserine: S527 and S533. Over residues 573-585 the composition is skewed to acidic residues; the sequence is PLEDEQEPEPEPE. Phosphoserine occurs at positions 593, 597, and 613. Basic and acidic residues predominate over residues 631–644; it reads AEPKAKARKTEARG. The chain crosses the membrane as a helical; Anchor for type IV membrane protein span at residues 675–695; that stretch reads VLICMVILLNIGLAILFVHLL.

It belongs to the junctophilin family. In terms of assembly, interacts with TRPC3. Interacts with BAG5 and HSPA8; the interaction with HSPA8 is increased in the presence of BAG5. Interacts with MEF2C. Post-translationally, proteolytically cleaved by calpain in response to cardiac stress. The major cleavage site takes place at the C-terminus and leads to the release of the Junctophilin-2 N-terminal fragment chain (JP2NT). Phosphorylation on Ser-165, probably by PKC, affects RYR1-mediated calcium ion release, interaction with TRPC3, and skeletal muscle myotubule development. In terms of tissue distribution, abundantly expressed in skeletal muscle and heart. Weak expression in stomach and lung.

It localises to the cell membrane. The protein localises to the sarcoplasmic reticulum membrane. It is found in the endoplasmic reticulum membrane. The protein resides in the nucleus. Its function is as follows. Membrane-binding protein that provides a structural bridge between the plasma membrane and the sarcoplasmic reticulum and is required for normal excitation-contraction coupling in cardiomyocytes. Provides a structural foundation for functional cross-talk between the cell surface and intracellular Ca(2+) release channels by maintaining the 12-15 nm gap between the sarcolemma and the sarcoplasmic reticulum membranes in the cardiac dyads. Necessary for proper intracellular Ca(2+) signaling in cardiac myocytes via its involvement in ryanodine receptor-mediated calcium ion release. Contributes to the construction of skeletal muscle triad junctions. In terms of biological role, transcription repressor required to safeguard against the deleterious effects of cardiac stress. Generated following cleavage of the Junctophilin-2 chain by calpain in response to cardiac stress in cardiomyocytes. Following cleavage and release from the membrane, translocates to the nucleus, binds DNA and represses expression of genes implicated in cell growth and differentiation, hypertrophy, inflammation and fibrosis. Modifies the transcription profile and thereby attenuates pathological remodeling in response to cardiac stress. Probably acts by competing with MEF2 transcription factors and TATA-binding proteins. The polypeptide is Junctophilin-2 (Mus musculus (Mouse)).